The sequence spans 554 residues: Glucose-6-phosphate isomerase (554 aa).

Residue glutamate 359 is the Proton donor of the active site. Residues histidine 390 and lysine 518 contribute to the active site.

This sequence belongs to the GPI family.

It is found in the cytoplasm. It carries out the reaction alpha-D-glucose 6-phosphate = beta-D-fructose 6-phosphate. It participates in carbohydrate biosynthesis; gluconeogenesis. It functions in the pathway carbohydrate degradation; glycolysis; D-glyceraldehyde 3-phosphate and glycerone phosphate from D-glucose: step 2/4. Its function is as follows. Catalyzes the reversible isomerization of glucose-6-phosphate to fructose-6-phosphate. This chain is Glucose-6-phosphate isomerase, found in Pseudomonas aeruginosa (strain LESB58).